We begin with the raw amino-acid sequence, 459 residues long: Sperm microtubule associated protein 2-like (459 aa).

Residues 1–138 (MEEGDFSGSS…QEDGKDDLFP (138 aa)) are disordered. Over residues 21-30 (TTTTTETRTT) the composition is skewed to low complexity. Acidic residues predominate over residues 47-63 (NGDEAEAVGEEGQEEDY). Residues 64–73 (EGSKTHKSHE) show a composition bias toward basic and acidic residues. The span at 77–87 (SFRSHNSSDPP) shows a compositional bias: polar residues. 2 stretches are compositionally biased toward basic and acidic residues: residues 91 to 112 (KASD…KTSD) and 127 to 136 (ERQEDGKDDL). THEG repeat units lie at residues 172 to 190 (KKCF…PKKQ), 212 to 231 (AALK…PRLV), 258 to 277 (PALV…PNKF), 291 to 310 (TTRY…AKGT), 327 to 346 (STLS…PRIK), 367 to 386 (AALL…SKRV), 403 to 422 (AATH…PHTR), and 440 to 459 (SALK…PIVR).

The polypeptide is Sperm microtubule associated protein 2-like (Mus musculus (Mouse)).